The following is a 355-amino-acid chain: Peptide chain release factor 1 (355 aa).

Gln-232 is subject to N5-methylglutamine.

The protein belongs to the prokaryotic/mitochondrial release factor family. In terms of processing, methylated by PrmC. Methylation increases the termination efficiency of RF1.

Its subcellular location is the cytoplasm. In terms of biological role, peptide chain release factor 1 directs the termination of translation in response to the peptide chain termination codons UAG and UAA. The sequence is that of Peptide chain release factor 1 from Thermobifida fusca (strain YX).